The following is a 310-amino-acid chain: Delta(1)-pyrroline-2-carboxylate reductase 1 (310 aa).

It belongs to the ornithine cyclodeaminase/mu-crystallin family.

The enzyme catalyses L-proline + NAD(+) = 1-pyrroline-2-carboxylate + NADH + H(+). It carries out the reaction L-proline + NADP(+) = 1-pyrroline-2-carboxylate + NADPH + H(+). In terms of biological role, catalyzes the reduction of Delta(1)-pyrroline-2-carboxylate (Pyr2C) to L-proline, using NADPH as the electron donor. May be involved in a degradation pathway that converts trans-3-hydroxy-L-proline (t3LHyp) to L-proline. This is Delta(1)-pyrroline-2-carboxylate reductase 1 from Burkholderia multivorans (strain ATCC 17616 / 249).